Consider the following 100-residue polypeptide: MICOS complex subunit MIC12 (100 aa).

Residues 10 to 26 (FATISSVAAASLYLYAI) form a helical membrane-spanning segment.

It belongs to the MICOS complex subunit Mic12 family. Component of the mitochondrial contact site and cristae organizing system (MICOS) complex.

The protein localises to the mitochondrion inner membrane. Functionally, component of the MICOS complex, a large protein complex of the mitochondrial inner membrane that plays crucial roles in the maintenance of crista junctions, inner membrane architecture, and formation of contact sites to the outer membrane. The polypeptide is MICOS complex subunit MIC12 (AIM5) (Vanderwaltozyma polyspora (strain ATCC 22028 / DSM 70294 / BCRC 21397 / CBS 2163 / NBRC 10782 / NRRL Y-8283 / UCD 57-17) (Kluyveromyces polysporus)).